The sequence spans 255 residues: Electron transfer flavoprotein beta subunit lysine methyltransferase (255 aa).

Residues M1–V32 constitute a mitochondrion transit peptide.

Belongs to the methyltransferase superfamily. ETFBKMT family. Interacts with HSPD1; this protein may possibly be a methylation substrate.

Its subcellular location is the cytoplasm. The protein resides in the mitochondrion matrix. It catalyses the reaction L-lysyl-[protein] + 3 S-adenosyl-L-methionine = N(6),N(6),N(6)-trimethyl-L-lysyl-[protein] + 3 S-adenosyl-L-homocysteine + 3 H(+). Protein-lysine methyltransferase that selectively trimethylates the flavoprotein ETFB in mitochondria. Thereby, may negatively regulate the function of ETFB in electron transfer from Acyl-CoA dehydrogenases. The protein is Electron transfer flavoprotein beta subunit lysine methyltransferase of Mus musculus (Mouse).